The primary structure comprises 691 residues: Elongation factor G (691 aa).

The region spanning Glu-8 to Ile-282 is the tr-type G domain. GTP contacts are provided by residues Ala-17–Thr-24, Asp-81–His-85, and Asn-135–Asp-138.

This sequence belongs to the TRAFAC class translation factor GTPase superfamily. Classic translation factor GTPase family. EF-G/EF-2 subfamily.

The protein localises to the cytoplasm. In terms of biological role, catalyzes the GTP-dependent ribosomal translocation step during translation elongation. During this step, the ribosome changes from the pre-translocational (PRE) to the post-translocational (POST) state as the newly formed A-site-bound peptidyl-tRNA and P-site-bound deacylated tRNA move to the P and E sites, respectively. Catalyzes the coordinated movement of the two tRNA molecules, the mRNA and conformational changes in the ribosome. This Prochlorococcus marinus subsp. pastoris (strain CCMP1986 / NIES-2087 / MED4) protein is Elongation factor G.